The chain runs to 464 residues: tRNA modification GTPase MnmE (464 aa).

Residues R27, E90, and K129 each coordinate (6S)-5-formyl-5,6,7,8-tetrahydrofolate. In terms of domain architecture, TrmE-type G spans 222–384; it reads GITLVLAGSV…LYDKIRTLIS (163 aa). Residues 232–237, 251–257, and 276–279 each bind GTP; these read NAGKSS, SSYPGTT, and DTAG. 2 residues coordinate Mg(2+): S236 and T257. K464 is a binding site for (6S)-5-formyl-5,6,7,8-tetrahydrofolate.

This sequence belongs to the TRAFAC class TrmE-Era-EngA-EngB-Septin-like GTPase superfamily. TrmE GTPase family. As to quaternary structure, homodimer. Heterotetramer of two MnmE and two MnmG subunits. It depends on K(+) as a cofactor.

Its subcellular location is the cytoplasm. Its function is as follows. Exhibits a very high intrinsic GTPase hydrolysis rate. Involved in the addition of a carboxymethylaminomethyl (cmnm) group at the wobble position (U34) of certain tRNAs, forming tRNA-cmnm(5)s(2)U34. The sequence is that of tRNA modification GTPase MnmE from Borreliella afzelii (strain PKo) (Borrelia afzelii).